The primary structure comprises 258 residues: MLRAAWRALSSVRAQAVTRAPVPALRGGSSASLLSARCGLQPPSLLRAARAYAAVQKPVQPKQDDEPPSSAFIKEYKDIIPNIEKVDDVVKRILSLEMASRKEKLKIKQEQLMNKIVENPEDSRTLEAQIIALTVRIRNYEEHMQKHRKDKAHKRHLLMSIDRRKKLLKILRQTNYDVFEKTCKELGVEYTLPPLHFQKVHRRFLAKKALCIRVYQEVQKLKKQKRALKAAAAAAKKEKNEGVPENPSNAVPEKTQVN.

Residues 1-57 constitute a mitochondrion transit peptide; the sequence is MLRAAWRALSSVRAQAVTRAPVPALRGGSSASLLSARCGLQPPSLLRAARAYAAVQK. A disordered region spans residues 229–258; that stretch reads KAAAAAAKKEKNEGVPENPSNAVPEKTQVN.

This sequence belongs to the universal ribosomal protein uS15 family. In terms of assembly, component of the mitochondrial ribosome small subunit (28S) which comprises a 12S rRNA and about 30 distinct proteins. Interacts with METTL17.

It is found in the mitochondrion matrix. The chain is Small ribosomal subunit protein uS15m (Mrps15) from Mus musculus (Mouse).